A 347-amino-acid polypeptide reads, in one-letter code: F-box/LRR-repeat/kelch-repeat protein At2g27520 (347 aa).

The F-box domain maps to Met-1–Ala-50. 4 LRR repeats span residues Leu-59–Gln-82, Cys-152–Lys-177, Lys-196–Asp-220, and Leu-261–Ile-285. The stretch at Lys-138–Gly-187 is one Kelch 1 repeat. The stretch at Met-306–Met-347 is one Kelch 2 repeat.

This chain is F-box/LRR-repeat/kelch-repeat protein At2g27520, found in Arabidopsis thaliana (Mouse-ear cress).